The following is a 262-amino-acid chain: 3-methyl-2-oxobutanoate hydroxymethyltransferase (262 aa).

Asp43 and Asp82 together coordinate Mg(2+). Residues 43–44 (DS), Asp82, and Lys111 contribute to the 3-methyl-2-oxobutanoate site. Glu113 lines the Mg(2+) pocket. Glu180 functions as the Proton acceptor in the catalytic mechanism.

This sequence belongs to the PanB family. As to quaternary structure, homodecamer; pentamer of dimers. The cofactor is Mg(2+).

It is found in the cytoplasm. It carries out the reaction 3-methyl-2-oxobutanoate + (6R)-5,10-methylene-5,6,7,8-tetrahydrofolate + H2O = 2-dehydropantoate + (6S)-5,6,7,8-tetrahydrofolate. It functions in the pathway cofactor biosynthesis; coenzyme A biosynthesis. Catalyzes the reversible reaction in which hydroxymethyl group from 5,10-methylenetetrahydrofolate is transferred onto alpha-ketoisovalerate to form ketopantoate. The sequence is that of 3-methyl-2-oxobutanoate hydroxymethyltransferase from Pyrobaculum aerophilum (strain ATCC 51768 / DSM 7523 / JCM 9630 / CIP 104966 / NBRC 100827 / IM2).